Reading from the N-terminus, the 755-residue chain is Serine/threonine-protein kinase GA29083 (755 aa).

Residues 18-52 (QASASGSGTPKKTAASSAAAQNSKQLLDQLSQQQK) are compositionally biased toward low complexity. The tract at residues 18 to 128 (QASASGSGTP…GSANTNGSAS (111 aa)) is disordered. 2 stretches are compositionally biased toward basic and acidic residues: residues 53–66 (AQEEAETHSRRDCD) and 74–84 (EPEKDLDELRD). The segment covering 87–99 (GSLTGSGSVGKSN) has biased composition (polar residues). Residues 100–128 (GSLSGASSTTSAPAGTSTPGSANTNGSAS) are compositionally biased toward low complexity. Doublecortin domains follow at residues 157–243 (HRIK…VDYN) and 314–397 (RIVT…VEDF). The Protein kinase domain occupies 484–742 (YTLSQIIGDG…SEDILDHYWT (259 aa)). Residues 490-498 (IGDGNFAIV) and Lys513 each bind ATP. Asp605 functions as the Proton acceptor in the catalytic mechanism.

This sequence belongs to the protein kinase superfamily. CAMK Ser/Thr protein kinase family. CaMK subfamily.

It catalyses the reaction L-seryl-[protein] + ATP = O-phospho-L-seryl-[protein] + ADP + H(+). The catalysed reaction is L-threonyl-[protein] + ATP = O-phospho-L-threonyl-[protein] + ADP + H(+). The protein is Serine/threonine-protein kinase GA29083 of Drosophila pseudoobscura pseudoobscura (Fruit fly).